A 780-amino-acid chain; its full sequence is Probable trehalase (780 aa).

The tract at residues 1 to 48 (MVDFLPKVTEINPPSEGNDGEDNIKPLSSGSEQRPLKEEGQQGGRRHH) is disordered. Residues Ser-52 and Ser-53 each carry the phosphoserine modification. The residue at position 88 (Thr-88) is a Phosphothreonine. Residue Ser-112 is modified to Phosphoserine. Substrate is bound by residues Arg-331, 338-339 (WD), Asn-375, Arg-384, 384-386 (RSQ), and Gly-505. Catalysis depends on proton donor/acceptor residues Asp-507 and Glu-703.

This sequence belongs to the glycosyl hydrolase 37 family.

It carries out the reaction alpha,alpha-trehalose + H2O = alpha-D-glucose + beta-D-glucose. This is Probable trehalase (NTH2) from Saccharomyces cerevisiae (strain ATCC 204508 / S288c) (Baker's yeast).